Reading from the N-terminus, the 315-residue chain is MPDMKLFAGNATPELAQRIANRLYTSLGDAAVGRFSDGEVSVQINENVRGGDIFIIQSTCAPTNDNLMELVVMVDALRRASAGRITAVIPYFGYARQDRRVRSARVPITAKVVADFLSSVGVDRVLTVDLHAEQIQGFFDVPVDNVFGSPILLEDMLQLNLDNPIVVSPDIGGVVRARAIAKLLNDTDMAIIDKRRPRANVSQVMHIIGDVAGRDCVLVDDMIDTGGTLCKAAEALKERGAKRVFAYATHPIFSGNAANNLRNSVIDEVVVCDTIPLTDEIKALPNVRTLTLSGMLAEAIRRISNEESISAMFEH.

Residues 37 to 39 (DGE) and 96 to 97 (RQ) contribute to the ATP site. 2 residues coordinate Mg(2+): His131 and Asp170. Residue Lys194 is part of the active site. D-ribose 5-phosphate contacts are provided by residues Arg196, Asp220, and 224 to 228 (DTGGT).

This sequence belongs to the ribose-phosphate pyrophosphokinase family. Class I subfamily. As to quaternary structure, homohexamer. Mg(2+) is required as a cofactor.

The protein localises to the cytoplasm. The enzyme catalyses D-ribose 5-phosphate + ATP = 5-phospho-alpha-D-ribose 1-diphosphate + AMP + H(+). It functions in the pathway metabolic intermediate biosynthesis; 5-phospho-alpha-D-ribose 1-diphosphate biosynthesis; 5-phospho-alpha-D-ribose 1-diphosphate from D-ribose 5-phosphate (route I): step 1/1. Involved in the biosynthesis of the central metabolite phospho-alpha-D-ribosyl-1-pyrophosphate (PRPP) via the transfer of pyrophosphoryl group from ATP to 1-hydroxyl of ribose-5-phosphate (Rib-5-P). The polypeptide is Ribose-phosphate pyrophosphokinase (Salmonella typhi).